A 66-amino-acid chain; its full sequence is Large ribosomal subunit protein uL29 (66 aa).

The protein belongs to the universal ribosomal protein uL29 family.

The sequence is that of Large ribosomal subunit protein uL29 from Rhizobium rhizogenes (strain K84 / ATCC BAA-868) (Agrobacterium radiobacter).